A 587-amino-acid chain; its full sequence is RuBisCO large subunit-binding protein subunit alpha, chloroplastic (587 aa).

The span at 1–25 (MASTNALSSTSILRSPTNQAQTSLS) shows a compositional bias: polar residues. Residues 1 to 33 (MASTNALSSTSILRSPTNQAQTSLSKKVKQHGR) are disordered. The transit peptide at 1–47 (MASTNALSSTSILRSPTNQAQTSLSKKVKQHGRVNFRQKPNRFVVKA) directs the protein to the chloroplast.

Belongs to the chaperonin (HSP60) family. In terms of assembly, oligomer of probably six alpha and six beta subunits.

It localises to the plastid. It is found in the chloroplast. Functionally, this protein binds RuBisCO small and large subunits and is implicated in the assembly of the enzyme oligomer. This is RuBisCO large subunit-binding protein subunit alpha, chloroplastic from Pisum sativum (Garden pea).